The chain runs to 222 residues: Cytochrome b6 (222 aa).

The chain crosses the membrane as a helical span at residues 39-59 (IFYCLGGITLVCFIIQFATGF). Cys42 contributes to the heme c binding site. Heme b contacts are provided by His93 and His107. 3 consecutive transmembrane segments (helical) span residues 97-117 (ASMMVLMMILHVFRVYLTGGF), 123-143 (LTWMTGVILAVITVSFGVTGY), and 193-213 (LHTFVFPWLIAVFMLMHFLMI). Heme b contacts are provided by His194 and His209.

The protein belongs to the cytochrome b family. PetB subfamily. In terms of assembly, the 4 large subunits of the cytochrome b6-f complex are cytochrome b6, subunit IV (17 kDa polypeptide, PetD), cytochrome f and the Rieske protein, while the 4 small subunits are PetG, PetL, PetM and PetN. The complex functions as a dimer. It depends on heme b as a cofactor. Heme c serves as cofactor.

The protein resides in the cellular thylakoid membrane. Functionally, component of the cytochrome b6-f complex, which mediates electron transfer between photosystem II (PSII) and photosystem I (PSI), cyclic electron flow around PSI, and state transitions. The polypeptide is Cytochrome b6 (Rippkaea orientalis (strain PCC 8801 / RF-1) (Cyanothece sp. (strain PCC 8801))).